The primary structure comprises 117 residues: DNA-directed RNA polymerase subunit omega (117 aa).

Belongs to the RNA polymerase subunit omega family. In terms of assembly, the RNAP catalytic core consists of 2 alpha, 1 beta, 1 beta' and 1 omega subunit. When a sigma factor is associated with the core the holoenzyme is formed, which can initiate transcription.

It catalyses the reaction RNA(n) + a ribonucleoside 5'-triphosphate = RNA(n+1) + diphosphate. Functionally, promotes RNA polymerase assembly. Latches the N- and C-terminal regions of the beta' subunit thereby facilitating its interaction with the beta and alpha subunits. This is DNA-directed RNA polymerase subunit omega from Jannaschia sp. (strain CCS1).